Here is a 459-residue protein sequence, read N- to C-terminus: DIMBOA UDP-glucosyltransferase BX8 (459 aa).

The active-site Proton acceptor is the histidine 19. Position 19 (histidine 19) interacts with an anthocyanidin. The active-site Charge relay is aspartate 119. The UDP-alpha-D-glucose site is built by threonine 141, alanine 340, glutamine 342, histidine 357, tryptophan 360, asparagine 361, serine 362, and glutamate 365. Position 380 (glycine 380) interacts with an anthocyanidin. Positions 381 and 382 each coordinate UDP-alpha-D-glucose.

Belongs to the UDP-glycosyltransferase family. Requires Mg(2+) as cofactor. Ca(2+) serves as cofactor. Expressed at the same levels in roots and shoots.

The enzyme catalyses DIMBOA + UDP-alpha-D-glucose = DIMBOA beta-D-glucoside + UDP + H(+). The catalysed reaction is DIBOA + UDP-alpha-D-glucose = DIBOA beta-D-glucoside + UDP + H(+). In terms of biological role, glucosyltransferase involved in the last step of benzoxazinoid glucoside biosynthesis. Catalyzes the glucosylation of hydroxamic acids utilizing UDP-glucose as glucose doner, reducing the toxicity of these natural insecticides for storage. Can use DIMBOA and DIBOA as substrates, HMBOA (2-hydroxy-7-methoxy-2H-1,4-benzoxazin-3(4H)-one) and HBOA (2-hydroxy-2H-1,4-benzoxazin-3(4H)-one) with a lower efficiency, but not indole acetic acid or quercitin. This Zea mays (Maize) protein is DIMBOA UDP-glucosyltransferase BX8 (Bx8).